The following is a 33-amino-acid chain: ECRKMFGGCSVDSDCCAHLGCKPTLKYCAWDGT.

3 cysteine pairs are disulfide-bonded: C2–C16, C9–C21, and C15–C28.

As to expression, expressed by the venom gland.

It is found in the secreted. Its function is as follows. Gating modifier of Kv2.1/KCNB1 channels. The sequence is that of Kappa-theraphotoxin-Pg2a from Chilobrachys guangxiensis (Chinese earth tiger tarantula).